A 477-amino-acid polypeptide reads, in one-letter code: Lactate utilization protein B (477 aa).

4Fe-4S ferredoxin-type domains follow at residues 304–334 (GTQFQSILQCIRCAACVNVCPVYRQTGGHSY) and 353–382 (YDTYKELPYASTLCGACTEACPVKIPLHDL). [4Fe-4S] cluster-binding residues include cysteine 313, cysteine 316, cysteine 319, cysteine 323, cysteine 366, cysteine 369, and cysteine 373. The disordered stretch occupies residues 443–463 (GPKPLQAWTNSRDFPMPDDEN).

This sequence belongs to the LutB/YkgF family.

Its function is as follows. Is involved in L-lactate degradation and allows cells to grow with lactate as the sole carbon source. Has probably a role as an electron transporter during oxidation of L-lactate. This Macrococcus caseolyticus (strain JCSC5402) (Macrococcoides caseolyticum) protein is Lactate utilization protein B.